Here is a 357-residue protein sequence, read N- to C-terminus: Arginine kinase Pro c 2.0101 (357 aa).

The 83-residue stretch at Lys9–Lys91 folds into the Phosphagen kinase N-terminal domain. Residue Gly64–Tyr68 participates in L-arginine binding. The 238-residue stretch at Phe119 to Met356 folds into the Phosphagen kinase C-terminal domain. ATP-binding positions include Ser122–Arg126 and His185. L-arginine is bound at residue Glu225. Position 229 (Arg229) interacts with ATP. Cys271 contacts L-arginine. Residues Arg280 to His284 and Arg309 to Glu314 each bind ATP. L-arginine is bound at residue Glu314.

Belongs to the ATP:guanido phosphotransferase family. Glycosylated. As to expression, muscle (at protein level).

It catalyses the reaction L-arginine + ATP = N(omega)-phospho-L-arginine + ADP + H(+). In terms of biological role, catalyzes the reversible transfer of high energy ATP gamma-phosphate group to L-arginine. The polypeptide is Arginine kinase Pro c 2.0101 (Procambarus clarkii (Red swamp crayfish)).